The chain runs to 1139 residues: Sterol regulatory element-binding protein 2 (1139 aa).

The interval 1–50 (MDESSELGGLETMDTLTELGDELTLGDIDEMLQFVSNQVGEFPDLFSEQL) is transcriptional activation (acidic). Residues 1-479 (MDESSELGGL…VALGMVDRSR (479 aa)) lie on the Cytoplasmic side of the membrane. 2 disordered regions span residues 48–104 (EQLC…SPST) and 119–143 (TPPR…SAQL). Positions 61–77 (GSSSSSNSSSSSGSNSR) are enriched in low complexity. Over residues 90–104 (RSFSQVPLPTFSPST) the composition is skewed to polar residues. A compositionally biased stretch (pro residues) spans 119 to 138 (TPPRATPVLQPRPQPQPQPQ). Residues 235-489 (QQVPVLVQPQ…ILLCVLTFLG (255 aa)) form an interaction with LMNA region. The 51-residue stretch at 328 to 378 (ERRTTHNIIEKRYRSSINDKIIELKDLVMGTDAKMHKSGVLRKAIDYIKYL) folds into the bHLH domain. Residues 378-399 (LQQVNHKLRQENMVLKLANQKN) form a leucine-zipper region. A Glycyl lysine isopeptide (Lys-Gly) (interchain with G-Cter in SUMO2) cross-link involves residue K462. A helical transmembrane segment spans residues 480–500 (ILLCVLTFLGLSFSPLTSLLQ). The Lumenal segment spans residues 501–531 (WGGAHDTDQHPYSGSGRSVLSLESGSGGWFD). The chain crosses the membrane as a helical span at residues 532-552 (WMMPTLLLWLVNGVIVLSVFV). At 553–1139 (KLLVHGEPVI…LGGGTAIAAS (587 aa)) the chain is on the cytoplasmic side. S1096 carries the phosphoserine modification.

This sequence belongs to the SREBP family. As to quaternary structure, homodimer; efficient DNA binding of the soluble transcription factor fragment requires dimerization with another bHLH protein. Interacts with LMNA. Forms a tight complex with SCAP, the SCAP-SREBP complex, in the endoplasmic reticulum membrane and the Golgi apparatus. Interacts with PAQR3; the interaction anchors the SCAP-SREBP complex to the Golgi apparatus in low cholesterol conditions. Interacts (via C-terminal domain) with RNF139. Processed in the Golgi apparatus, releasing the protein from the membrane. At low cholesterol the SCAP-SREBP complex is recruited into COPII vesicles for export from the endoplasmic reticulum. In the Golgi, complex SREBPs are cleaved sequentially by site-1 (MBTPS1, S1P) and site-2 (MBTPS2, S2P) proteases. The first cleavage by site-1 protease occurs within the luminal loop, the second cleavage by site-2 protease occurs within the first transmembrane domain, releasing the transcription factor from the Golgi membrane. Apoptosis triggers cleavage by the cysteine proteases caspase-3 and caspase-7. Cleavage and activation is induced by mediated cholesterol efflux. In terms of processing, phosphorylated by AMPK, leading to suppress protein processing and nuclear translocation, and repress target gene expression. Post-translationally, SCAP-free SREBF2 is ubiquitinated by the BCR(ARMC5) complex, leading to its degradation. Ubiquitinated; the nuclear form has a rapid turnover and is rapidly ubiquitinated and degraded by the proteasome in the nucleus.

It localises to the endoplasmic reticulum membrane. The protein localises to the golgi apparatus membrane. Its subcellular location is the cytoplasmic vesicle. The protein resides in the COPII-coated vesicle membrane. It is found in the nucleus. Its activity is regulated as follows. Activation by cleavage is down-regulated upon activation of SIRT3-dependent PRKAA1/AMPK-alpha signaling cascade which leads to inhibition of ATP-consuming lipogenesis to restore cellular energy balance. Functionally, precursor of the transcription factor form (Processed sterol regulatory element-binding protein 2), which is embedded in the endoplasmic reticulum membrane. Low sterol concentrations promote processing of this form, releasing the transcription factor form that translocates into the nucleus and activates transcription of genes involved in cholesterol biosynthesis. Its function is as follows. Key transcription factor that regulates expression of genes involved in cholesterol biosynthesis. Binds to the sterol regulatory element 1 (SRE-1) (5'-ATCACCCCAC-3'). Has dual sequence specificity binding to both an E-box motif (5'-ATCACGTGA-3') and to SRE-1 (5'-ATCACCCCAC-3'). Regulates transcription of genes related to cholesterol synthesis pathway. The sequence is that of Sterol regulatory element-binding protein 2 (SREBF2) from Cricetulus griseus (Chinese hamster).